Reading from the N-terminus, the 358-residue chain is MTRLLIAASGTGGHLFPALAVADALDGHCQVSWLGVPDRLETELVPARFKLITVNAGGLQGRGITKLVQLIRLLAASITVRRLIRTHQIDAVFTTGGYIAAPAILGARWCGVPAVLHESNAIPGRVTRLLGRFCSAVAVGLPVAAGRIPGCRPVLTGTPVRSGFLNAQPLPDWVPSGAGPLLVVMGGSQGAIGLNRMVRAVLPELLEQGCRVVHLTGSNDPDVGELQHPRLVECRFSDDIPGLLQHADLAISRAGAGSLSELAVCGTPSILVPFPQAADQHQDANAACAAELGGAVIVHQHPPGHPALGNSIKRLLGARLGDTDSRPELLEQMRAGMDELAQRDADAQLARLLADLVR.

UDP-N-acetyl-alpha-D-glucosamine is bound by residues 11-13, Asn-120, Arg-161, Ser-188, and Gln-282; that span reads TGG.

Belongs to the glycosyltransferase 28 family. MurG subfamily.

The protein resides in the cell inner membrane. It catalyses the reaction di-trans,octa-cis-undecaprenyl diphospho-N-acetyl-alpha-D-muramoyl-L-alanyl-D-glutamyl-meso-2,6-diaminopimeloyl-D-alanyl-D-alanine + UDP-N-acetyl-alpha-D-glucosamine = di-trans,octa-cis-undecaprenyl diphospho-[N-acetyl-alpha-D-glucosaminyl-(1-&gt;4)]-N-acetyl-alpha-D-muramoyl-L-alanyl-D-glutamyl-meso-2,6-diaminopimeloyl-D-alanyl-D-alanine + UDP + H(+). It participates in cell wall biogenesis; peptidoglycan biosynthesis. In terms of biological role, cell wall formation. Catalyzes the transfer of a GlcNAc subunit on undecaprenyl-pyrophosphoryl-MurNAc-pentapeptide (lipid intermediate I) to form undecaprenyl-pyrophosphoryl-MurNAc-(pentapeptide)GlcNAc (lipid intermediate II). This Synechococcus sp. (strain CC9902) protein is UDP-N-acetylglucosamine--N-acetylmuramyl-(pentapeptide) pyrophosphoryl-undecaprenol N-acetylglucosamine transferase.